A 240-amino-acid chain; its full sequence is Orotidine 5'-phosphate decarboxylase (240 aa).

Substrate-binding positions include aspartate 19, lysine 41, 68-77 (DYKYYDIEET), threonine 123, arginine 184, glutamine 193, glycine 213, and arginine 214. Catalysis depends on lysine 70, which acts as the Proton donor.

It belongs to the OMP decarboxylase family. Type 1 subfamily. As to quaternary structure, homodimer.

The enzyme catalyses orotidine 5'-phosphate + H(+) = UMP + CO2. It participates in pyrimidine metabolism; UMP biosynthesis via de novo pathway; UMP from orotate: step 2/2. Catalyzes the decarboxylation of orotidine 5'-monophosphate (OMP) to uridine 5'-monophosphate (UMP). In Nitrobacter winogradskyi (strain ATCC 25391 / DSM 10237 / CIP 104748 / NCIMB 11846 / Nb-255), this protein is Orotidine 5'-phosphate decarboxylase.